Consider the following 280-residue polypeptide: Putative protein-tyrosine sulfotransferase (280 aa).

Position 16–20 (16–20) interacts with 3'-phosphoadenylyl sulfate; that stretch reads RSGTT. Cys-34 and Cys-89 are oxidised to a cystine. The Proton donor/acceptor role is filled by Glu-37. The N-linked (GlcNAc...) asparagine glycan is linked to Asn-57. 3'-phosphoadenylyl sulfate is bound by residues Arg-116, Ser-124, and Arg-128. Asn-136 carries N-linked (GlcNAc...) asparagine glycosylation. A disulfide bridge links Cys-158 with Cys-165. 3'-phosphoadenylyl sulfate is bound by residues Tyr-170 and 215 to 224; that span reads SASQVKNSIN.

It belongs to the protein sulfotransferase family.

It carries out the reaction L-tyrosyl-[protein] + 3'-phosphoadenylyl sulfate = O-sulfo-L-tyrosine-[protein] + adenosine 3',5'-bisphosphate + H(+). Catalyzes the O-sulfation of tyrosine residues within acidic motifs of polypeptides, using 3'-phosphoadenylyl sulfate (PAPS) as cosubstrate. This chain is Putative protein-tyrosine sulfotransferase, found in Caenorhabditis briggsae.